The primary structure comprises 185 residues: Ribosome-recycling factor (185 aa).

Belongs to the RRF family.

The protein localises to the cytoplasm. In terms of biological role, responsible for the release of ribosomes from messenger RNA at the termination of protein biosynthesis. May increase the efficiency of translation by recycling ribosomes from one round of translation to another. This chain is Ribosome-recycling factor, found in Shewanella baltica (strain OS185).